Consider the following 472-residue polypeptide: E3 ubiquitin-protein ligase MYLIP-A (472 aa).

One can recognise an FERM domain in the interval 1–279; that stretch reads MLCHVTRPDA…ETHAFYRCDT (279 aa). The RING-type zinc-finger motif lies at 384–419; that stretch reads CMLCCEEEIDAAFCPCGHMVCCQNCAAQLQSCPVCR.

As to quaternary structure, interacts with anxa5. In terms of tissue distribution, ubiquitous.

The protein resides in the cytoplasm. The protein localises to the cytosol. It carries out the reaction S-ubiquitinyl-[E2 ubiquitin-conjugating enzyme]-L-cysteine + [acceptor protein]-L-lysine = [E2 ubiquitin-conjugating enzyme]-L-cysteine + N(6)-ubiquitinyl-[acceptor protein]-L-lysine.. Its pathway is protein modification; protein ubiquitination. Its function is as follows. E3 ubiquitin-protein ligase that mediates ubiquitination and subsequent proteasomal degradation of myosin regulatory light chain (MRLC). Regulates cell movements during gastrulation by acting downstream of fz7 to antagonize the frizzled-signaling pathway. The polypeptide is E3 ubiquitin-protein ligase MYLIP-A (mylipa) (Danio rerio (Zebrafish)).